Reading from the N-terminus, the 47-residue chain is Putative heat shock protein HSP90 (47 aa).

Arg-47 contributes to the ATP binding site.

This sequence belongs to the heat shock protein 90 family. As to quaternary structure, homodimer.

It localises to the cytoplasm. Its function is as follows. Putative molecular chaperone that may promote the maturation, structural maintenance and proper regulation of specific target proteins. The chain is Putative heat shock protein HSP90 from Populus euphratica (Euphrates poplar).